We begin with the raw amino-acid sequence, 239 residues long: Uridylate kinase (239 aa).

10-13 (KFSG) contributes to the ATP binding site. The interval 18–23 (GENGFG) is involved in allosteric activation by GTP. Glycine 52 serves as a coordination point for UMP. ATP-binding residues include glycine 53 and arginine 57. Residues aspartate 73 and 134–141 (TGNPYFTT) each bind UMP. Residues threonine 161, tyrosine 167, and aspartate 170 each coordinate ATP.

It belongs to the UMP kinase family. Homohexamer.

The protein resides in the cytoplasm. The enzyme catalyses UMP + ATP = UDP + ADP. Its pathway is pyrimidine metabolism; CTP biosynthesis via de novo pathway; UDP from UMP (UMPK route): step 1/1. Allosterically activated by GTP. Inhibited by UTP. Functionally, catalyzes the reversible phosphorylation of UMP to UDP. This is Uridylate kinase from Campylobacter jejuni subsp. jejuni serotype O:6 (strain 81116 / NCTC 11828).